The primary structure comprises 257 residues: 3-deoxy-manno-octulosonate cytidylyltransferase (257 aa).

Belongs to the KdsB family.

The protein localises to the cytoplasm. It catalyses the reaction 3-deoxy-alpha-D-manno-oct-2-ulosonate + CTP = CMP-3-deoxy-beta-D-manno-octulosonate + diphosphate. The protein operates within nucleotide-sugar biosynthesis; CMP-3-deoxy-D-manno-octulosonate biosynthesis; CMP-3-deoxy-D-manno-octulosonate from 3-deoxy-D-manno-octulosonate and CTP: step 1/1. It participates in bacterial outer membrane biogenesis; lipopolysaccharide biosynthesis. In terms of biological role, activates KDO (a required 8-carbon sugar) for incorporation into bacterial lipopolysaccharide in Gram-negative bacteria. The polypeptide is 3-deoxy-manno-octulosonate cytidylyltransferase (Halorhodospira halophila (strain DSM 244 / SL1) (Ectothiorhodospira halophila (strain DSM 244 / SL1))).